The following is a 242-amino-acid chain: Biosynthetic peptidoglycan transglycosylase (242 aa).

Residues 19–39 (LMVVLAVFWGGGIALFSVAPV) traverse the membrane as a helical segment.

It belongs to the glycosyltransferase 51 family.

It localises to the cell inner membrane. The catalysed reaction is [GlcNAc-(1-&gt;4)-Mur2Ac(oyl-L-Ala-gamma-D-Glu-L-Lys-D-Ala-D-Ala)](n)-di-trans,octa-cis-undecaprenyl diphosphate + beta-D-GlcNAc-(1-&gt;4)-Mur2Ac(oyl-L-Ala-gamma-D-Glu-L-Lys-D-Ala-D-Ala)-di-trans,octa-cis-undecaprenyl diphosphate = [GlcNAc-(1-&gt;4)-Mur2Ac(oyl-L-Ala-gamma-D-Glu-L-Lys-D-Ala-D-Ala)](n+1)-di-trans,octa-cis-undecaprenyl diphosphate + di-trans,octa-cis-undecaprenyl diphosphate + H(+). The protein operates within cell wall biogenesis; peptidoglycan biosynthesis. Its function is as follows. Peptidoglycan polymerase that catalyzes glycan chain elongation from lipid-linked precursors. The chain is Biosynthetic peptidoglycan transglycosylase from Escherichia coli (strain ATCC 8739 / DSM 1576 / NBRC 3972 / NCIMB 8545 / WDCM 00012 / Crooks).